Reading from the N-terminus, the 302-residue chain is N-acetyl-D-glucosamine kinase (302 aa).

ATP is bound by residues 4–11 and 133–140; these read GFDVGGTK and GFGGGLVY. Zn(2+) contacts are provided by histidine 157, cysteine 177, cysteine 179, and cysteine 184.

The protein belongs to the ROK (NagC/XylR) family. NagK subfamily.

The catalysed reaction is N-acetyl-D-glucosamine + ATP = N-acetyl-D-glucosamine 6-phosphate + ADP + H(+). It functions in the pathway cell wall biogenesis; peptidoglycan recycling. Catalyzes the phosphorylation of N-acetyl-D-glucosamine (GlcNAc) derived from cell-wall degradation, yielding GlcNAc-6-P. This is N-acetyl-D-glucosamine kinase from Vibrio cholerae serotype O1 (strain ATCC 39315 / El Tor Inaba N16961).